Consider the following 197-residue polypeptide: Holliday junction branch migration complex subunit RuvA (197 aa).

A domain I region spans residues Met-1–Val-63. The interval Asn-64 to Leu-142 is domain II. Residues Leu-142 to Pro-146 are flexible linker. Residues Ala-147–Lys-197 are domain III.

Belongs to the RuvA family. In terms of assembly, homotetramer. Forms an RuvA(8)-RuvB(12)-Holliday junction (HJ) complex. HJ DNA is sandwiched between 2 RuvA tetramers; dsDNA enters through RuvA and exits via RuvB. An RuvB hexamer assembles on each DNA strand where it exits the tetramer. Each RuvB hexamer is contacted by two RuvA subunits (via domain III) on 2 adjacent RuvB subunits; this complex drives branch migration. In the full resolvosome a probable DNA-RuvA(4)-RuvB(12)-RuvC(2) complex forms which resolves the HJ.

The protein localises to the cytoplasm. Its function is as follows. The RuvA-RuvB-RuvC complex processes Holliday junction (HJ) DNA during genetic recombination and DNA repair, while the RuvA-RuvB complex plays an important role in the rescue of blocked DNA replication forks via replication fork reversal (RFR). RuvA specifically binds to HJ cruciform DNA, conferring on it an open structure. The RuvB hexamer acts as an ATP-dependent pump, pulling dsDNA into and through the RuvAB complex. HJ branch migration allows RuvC to scan DNA until it finds its consensus sequence, where it cleaves and resolves the cruciform DNA. In Lactococcus lactis subsp. cremoris (strain MG1363), this protein is Holliday junction branch migration complex subunit RuvA.